We begin with the raw amino-acid sequence, 751 residues long: Glutamate carboxypeptidase 2 (751 aa).

Over 1-19 the chain is Cytoplasmic; that stretch reads MWNPLHETDSTSVAWRRPR. Ser10 is subject to Phosphoserine. The chain crosses the membrane as a helical; Signal-anchor for type II membrane protein span at residues 20 to 43; the sequence is WLCAGALVLAAGLFVLGFLFGWFI. Residues 44–750 are Extracellular-facing; the sequence is KSPNEAANIS…QAAAGTLREV (707 aa). 6 N-linked (GlcNAc...) asparagine glycosylation sites follow: Asn51, Asn77, Asn122, Asn141, Asn154, and Asn196. Substrate-binding residues include Arg211 and Asn258. Positions 270 and 273 each coordinate Ca(2+). Residues 275-588 form an NAALADase region; that stretch reads ANEYAYRLQI…QVRGGIVFEL (314 aa). An N-linked (GlcNAc...) asparagine glycan is attached at Asn337. Zn(2+) contacts are provided by His378 and Asp388. Glu425 is a binding site for substrate. The active-site Nucleophile; for NAALADase activity is Glu425. Glu426 serves as a coordination point for Zn(2+). 2 residues coordinate Ca(2+): Glu434 and Glu437. Asp454 is a binding site for Zn(2+). Asn460 and Asn477 each carry an N-linked (GlcNAc...) asparagine glycan. Residues 518 to 519, Asn520, 535 to 537, Tyr553, and 553 to 554 each bind substrate; these read SG, RAR, and YH. Residue His554 participates in Zn(2+) binding. N-linked (GlcNAc...) asparagine glycosylation occurs at Asn614. Ser629 (charge relay system) is an active-site residue. Asn639 and Asn646 each carry an N-linked (GlcNAc...) asparagine glycan. Catalysis depends on charge relay system residues Asp667 and His690. 700-701 is a binding site for substrate; it reads KY.

This sequence belongs to the peptidase M28 family. M28B subfamily. Homodimer. It depends on Zn(2+) as a cofactor. In terms of tissue distribution, high expression in the duodenum and in the jejunum brush-border membrane. Weak expression in kidney.

Its subcellular location is the cell membrane. It catalyses the reaction Release of an unsubstituted, C-terminal glutamyl residue, typically from Ac-Asp-Glu or folylpoly-gamma-glutamates.. With respect to regulation, the NAALADase activity is inhibited by quisqualic acid, beta-NAAG and 2-(phosphonomethyl) pentanedioic acid (PMPA). Ethanol ingestion decreases the folate hydrolase activity by 50%. Functionally, has both folate hydrolase and N-acetylated-alpha-linked-acidic dipeptidase (NAALADase) activity. Has a preference for tri-alpha-glutamate peptides. In the intestine, required for the uptake of folate. In the brain, modulates excitatory neurotransmission through the hydrolysis of the neuropeptide, N-aceylaspartylglutamate (NAAG), thereby releasing glutamate. In terms of biological role, also exhibits a dipeptidyl-peptidase IV type activity. In vitro, cleaves Gly-Pro-AMC. This chain is Glutamate carboxypeptidase 2 (FOLH1), found in Sus scrofa (Pig).